A 354-amino-acid polypeptide reads, in one-letter code: Glycerol-3-phosphate dehydrogenase [NAD(+)], glycosomal (354 aa).

NAD(+) is bound by residues 15 to 20 (GSGAFG), phenylalanine 90, lysine 118, and alanine 150. Position 118 (lysine 118) interacts with substrate. Lysine 203 functions as the Proton acceptor in the catalytic mechanism. NAD(+) is bound by residues arginine 267 and glutamate 293. 267–268 (RN) provides a ligand contact to substrate. Residues 352–354 (SKM) carry the Microbody targeting signal motif.

This sequence belongs to the NAD-dependent glycerol-3-phosphate dehydrogenase family.

The protein localises to the glycosome. The catalysed reaction is sn-glycerol 3-phosphate + NAD(+) = dihydroxyacetone phosphate + NADH + H(+). This is Glycerol-3-phosphate dehydrogenase [NAD(+)], glycosomal (GPD) from Trypanosoma brucei brucei.